The sequence spans 213 residues: Negative modulator of initiation of replication (213 aa).

Interaction with DNA regions lie at residues 116-117 (AV), 145-149 (RTRVY), and 179-185 (NTNSGRK).

This sequence belongs to the SeqA family. Homodimer. Polymerizes to form helical filaments.

The protein localises to the cytoplasm. Functionally, negative regulator of replication initiation, which contributes to regulation of DNA replication and ensures that replication initiation occurs exactly once per chromosome per cell cycle. Binds to pairs of hemimethylated GATC sequences in the oriC region, thus preventing assembly of replication proteins and re-initiation at newly replicated origins. Repression is relieved when the region becomes fully methylated. The sequence is that of Negative modulator of initiation of replication from Haemophilus parainfluenzae (strain T3T1).